The following is a 250-amino-acid chain: Ribonuclease PH (250 aa).

Phosphate-binding positions include arginine 99 and 137 to 139 (GTR).

It belongs to the RNase PH family. In terms of assembly, homohexameric ring arranged as a trimer of dimers.

The enzyme catalyses tRNA(n+1) + phosphate = tRNA(n) + a ribonucleoside 5'-diphosphate. Functionally, phosphorolytic 3'-5' exoribonuclease that plays an important role in tRNA 3'-end maturation. Removes nucleotide residues following the 3'-CCA terminus of tRNAs; can also add nucleotides to the ends of RNA molecules by using nucleoside diphosphates as substrates, but this may not be physiologically important. Probably plays a role in initiation of 16S rRNA degradation (leading to ribosome degradation) during starvation. The protein is Ribonuclease PH of Bordetella parapertussis (strain 12822 / ATCC BAA-587 / NCTC 13253).